The sequence spans 187 residues: Calmodulin-like protein 1 (187 aa).

Residue Ala-2 is modified to N-acetylalanine. 4 consecutive EF-hand domains span residues 8 to 43, 44 to 79, 81 to 116, and 117 to 152; these read EQIG…LGQN, PTEA…KLRD, DSEE…IGER, and LTDE…KKRR. The Ca(2+) site is built by Asp-21, Asp-23, Asp-25, Ser-27, Glu-32, Asp-57, Asp-59, Asn-61, Asn-63, Glu-68, Asp-94, Asp-96, Asn-98, Glu-105, Asp-130, Asp-132, Asp-134, Gln-136, and Glu-141. The interval 153–187 is disordered; sequence KRIEEKRDHDGGSRTKSAGPSAAPASKRGQKCVIL. A compositionally biased stretch (basic and acidic residues) spans 154–165; it reads RIEEKRDHDGGS. The span at 169–178 shows a compositional bias: low complexity; sequence SAGPSAAPAS. Cys-184 is subject to Cysteine methyl ester. Residue Cys-184 is the site of S-farnesyl cysteine attachment. The propeptide at 185–187 is removed in mature form; the sequence is VIL.

The protein belongs to the calmodulin family.

The protein resides in the membrane. Functionally, calcium-binding protein that binds and activates CAMK1, a calcium/calmodulin-dependent kinase. The protein is Calmodulin-like protein 1 (CML1) of Oryza sativa subsp. japonica (Rice).